The primary structure comprises 539 residues: Protein ENTREP2 (539 aa).

Transmembrane regions (helical) follow at residues Ile-31–Phe-51, Ser-65–Trp-85, Leu-89–Ala-109, and Leu-176–Ala-196. The interval Val-301–Val-481 is disordered. Residues Pro-306–Phe-331 show a composition bias toward polar residues. Residues Gly-347 to Ala-365 show a composition bias toward low complexity. Residues Ser-395 to Met-408 are compositionally biased toward polar residues.

Belongs to the ENTREP family.

It is found in the membrane. In Homo sapiens (Human), this protein is Protein ENTREP2.